A 108-amino-acid polypeptide reads, in one-letter code: Nucleoid-associated protein Bphyt_1827 (108 aa).

The interval 87 to 108 (AQEKMGGMTSGLPLPPGFKLPF) is disordered. Residues 99–108 (PLPPGFKLPF) are compositionally biased toward pro residues.

It belongs to the YbaB/EbfC family. Homodimer.

It is found in the cytoplasm. The protein localises to the nucleoid. Functionally, binds to DNA and alters its conformation. May be involved in regulation of gene expression, nucleoid organization and DNA protection. This chain is Nucleoid-associated protein Bphyt_1827, found in Paraburkholderia phytofirmans (strain DSM 17436 / LMG 22146 / PsJN) (Burkholderia phytofirmans).